Reading from the N-terminus, the 429-residue chain is UDP-N-acetylglucosamine 1-carboxyvinyltransferase (429 aa).

A phosphoenolpyruvate-binding site is contributed by 22–23 (KN). Residue Arg-102 participates in UDP-N-acetyl-alpha-D-glucosamine binding. The active-site Proton donor is Cys-126. The residue at position 126 (Cys-126) is a 2-(S-cysteinyl)pyruvic acid O-phosphothioketal. UDP-N-acetyl-alpha-D-glucosamine-binding positions include 131–135 (RPVDL), Asp-316, and Ile-338.

The protein belongs to the EPSP synthase family. MurA subfamily.

It is found in the cytoplasm. It catalyses the reaction phosphoenolpyruvate + UDP-N-acetyl-alpha-D-glucosamine = UDP-N-acetyl-3-O-(1-carboxyvinyl)-alpha-D-glucosamine + phosphate. The protein operates within cell wall biogenesis; peptidoglycan biosynthesis. Functionally, cell wall formation. Adds enolpyruvyl to UDP-N-acetylglucosamine. The polypeptide is UDP-N-acetylglucosamine 1-carboxyvinyltransferase (Nitrobacter hamburgensis (strain DSM 10229 / NCIMB 13809 / X14)).